Here is a 289-residue protein sequence, read N- to C-terminus: Glycine--tRNA ligase alpha subunit (289 aa).

This sequence belongs to the class-II aminoacyl-tRNA synthetase family. Tetramer of two alpha and two beta subunits.

It is found in the cytoplasm. The enzyme catalyses tRNA(Gly) + glycine + ATP = glycyl-tRNA(Gly) + AMP + diphosphate. The protein is Glycine--tRNA ligase alpha subunit (glyQ) of Rickettsia prowazekii (strain Madrid E).